Reading from the N-terminus, the 154-residue chain is 6,7-dimethyl-8-ribityllumazine synthase (154 aa).

Residues Phe22, 56-58 (AFE), and 80-82 (AVI) contribute to the 5-amino-6-(D-ribitylamino)uracil site. 85 to 86 (AT) lines the (2S)-2-hydroxy-3-oxobutyl phosphate pocket. The active-site Proton donor is the His88. Phe113 is a 5-amino-6-(D-ribitylamino)uracil binding site. Residue Arg127 coordinates (2S)-2-hydroxy-3-oxobutyl phosphate.

The protein belongs to the DMRL synthase family. As to quaternary structure, forms an icosahedral capsid composed of 60 subunits, arranged as a dodecamer of pentamers.

The enzyme catalyses (2S)-2-hydroxy-3-oxobutyl phosphate + 5-amino-6-(D-ribitylamino)uracil = 6,7-dimethyl-8-(1-D-ribityl)lumazine + phosphate + 2 H2O + H(+). It participates in cofactor biosynthesis; riboflavin biosynthesis; riboflavin from 2-hydroxy-3-oxobutyl phosphate and 5-amino-6-(D-ribitylamino)uracil: step 1/2. Functionally, catalyzes the formation of 6,7-dimethyl-8-ribityllumazine by condensation of 5-amino-6-(D-ribitylamino)uracil with 3,4-dihydroxy-2-butanone 4-phosphate. This is the penultimate step in the biosynthesis of riboflavin. This Geobacillus sp. (strain WCH70) protein is 6,7-dimethyl-8-ribityllumazine synthase.